A 238-amino-acid chain; its full sequence is Uridylate kinase (238 aa).

Residue 10–13 (KFSG) participates in ATP binding. An involved in allosteric activation by GTP region spans residues 18-23 (GGNGFG). Position 52 (Gly-52) interacts with UMP. Residues Gly-53 and Arg-57 each contribute to the ATP site. Residues Asp-73 and 134 to 141 (TGNPFFTT) contribute to the UMP site. Thr-161, Tyr-167, and Asp-170 together coordinate ATP.

It belongs to the UMP kinase family. Homohexamer.

Its subcellular location is the cytoplasm. The catalysed reaction is UMP + ATP = UDP + ADP. It participates in pyrimidine metabolism; CTP biosynthesis via de novo pathway; UDP from UMP (UMPK route): step 1/1. Its activity is regulated as follows. Allosterically activated by GTP. Inhibited by UTP. Its function is as follows. Catalyzes the reversible phosphorylation of UMP to UDP. In Campylobacter fetus subsp. fetus (strain 82-40), this protein is Uridylate kinase.